The chain runs to 382 residues: ATP phosphoribosyltransferase regulatory subunit (382 aa).

The protein belongs to the class-II aminoacyl-tRNA synthetase family. HisZ subfamily. Heteromultimer composed of HisG and HisZ subunits.

It localises to the cytoplasm. It functions in the pathway amino-acid biosynthesis; L-histidine biosynthesis; L-histidine from 5-phospho-alpha-D-ribose 1-diphosphate: step 1/9. Functionally, required for the first step of histidine biosynthesis. May allow the feedback regulation of ATP phosphoribosyltransferase activity by histidine. In Burkholderia pseudomallei (strain 668), this protein is ATP phosphoribosyltransferase regulatory subunit.